The primary structure comprises 193 residues: Ion-translocating oxidoreductase complex subunit A (193 aa).

A run of 6 helical transmembrane segments spans residues 5–25 (ALLF…FLGL), 39–59 (IGMG…SWLI), 62–82 (FILV…LVLA), 102–122 (LLGI…VVLL), 134–154 (TIYG…FAAI), and 171–191 (SIAL…TGLV).

This sequence belongs to the NqrDE/RnfAE family. As to quaternary structure, the complex is composed of six subunits: RnfA, RnfB, RnfC, RnfD, RnfE and RnfG.

It localises to the cell inner membrane. In terms of biological role, part of a membrane-bound complex that couples electron transfer with translocation of ions across the membrane. This is Ion-translocating oxidoreductase complex subunit A from Pectobacterium atrosepticum (strain SCRI 1043 / ATCC BAA-672) (Erwinia carotovora subsp. atroseptica).